Here is a 268-residue protein sequence, read N- to C-terminus: tRNA (guanine-N(7)-)-methyltransferase (268 aa).

Positions 1 to 21 (MMAGAEAPQPQKRYYRQRAHS) are disordered. At Ser-21 the chain carries Phosphoserine. Gly-78, Glu-101, Arg-103, Asn-134, Ala-135, and Leu-154 together coordinate S-adenosyl-L-methionine. Residue Asp-157 is part of the active site. Positions 158–166 (PHFKRTKHK) are alphaC helix. S-adenosyl-L-methionine contacts are provided by Thr-232 and Glu-234. Positions 232–240 (TEEGKKVLR) are alpha6 helix.

This sequence belongs to the class I-like SAM-binding methyltransferase superfamily. TrmB family. In terms of assembly, catalytic component of the METTL1-WDR4 complex, composed of METTL1 and WDR4. Post-translationally, phosphorylation at Ser-21 by PKB/AKT1 inactivates its methyltransferase activity via a steric interference mechanism in the active site that locally disrupts the catalytic center. Phosphorylation at Ser-21 does not affect the interaction with WDR4.

It localises to the nucleus. The catalysed reaction is guanosine(46) in tRNA + S-adenosyl-L-methionine = N(7)-methylguanosine(46) in tRNA + S-adenosyl-L-homocysteine. It carries out the reaction a guanosine in mRNA + S-adenosyl-L-methionine = an N(7)-methylguanosine in mRNA + S-adenosyl-L-homocysteine. The enzyme catalyses a guanosine in miRNA + S-adenosyl-L-methionine = an N(7)-methylguanosine in miRNA + S-adenosyl-L-homocysteine. It functions in the pathway tRNA modification; N(7)-methylguanine-tRNA biosynthesis. Catalytic component of METTL1-WDR4 methyltransferase complex that mediates the formation of N(7)-methylguanine in a subset of RNA species, such as tRNAs, mRNAs and microRNAs (miRNAs). Catalyzes the formation of N(7)-methylguanine at position 46 (m7G46) in a large subset of tRNAs that contain the 5'-RAGGU-3' motif within the variable loop. M7G46 interacts with C13-G22 in the D-loop to stabilize tRNA tertiary structure and protect tRNAs from decay. Also acts as a methyltransferase for a subset of internal N(7)-methylguanine in mRNAs. Internal N(7)-methylguanine methylation of mRNAs in response to stress promotes their relocalization to stress granules, thereby suppressing their translation. Also methylates a specific subset of miRNAs, such as let-7. N(7)-methylguanine methylation of let-7 miRNA promotes let-7 miRNA processing by disrupting an inhibitory secondary structure within the primary miRNA transcript (pri-miRNA). Acts as a regulator of embryonic stem cell self-renewal and differentiation. This chain is tRNA (guanine-N(7)-)-methyltransferase, found in Mus musculus (Mouse).